Reading from the N-terminus, the 330-residue chain is Probable WRKY transcription factor 74 (330 aa).

Positions 256-322 (KIADIPPDEY…YEGEHNHSRI (67 aa)) form a DNA-binding region, WRKY.

The protein localises to the nucleus. In terms of biological role, transcription factor. Interacts specifically with the W box (5'-(T)TGAC[CT]-3'), a frequently occurring elicitor-responsive cis-acting element. The polypeptide is Probable WRKY transcription factor 74 (WRKY74) (Arabidopsis thaliana (Mouse-ear cress)).